Reading from the N-terminus, the 311-residue chain is Fucose-specific lectin (311 aa).

A run of 6 repeats spans residues 1-53, 54-103, 104-151, 152-209, 210-256, and 257-311. The segment at 1–311 is 6 X approximate tandem repeats; the sequence is MSTPGAQEVL…LGRRALPPAE (311 aa). Residues R25, E37, W44, R73, E85, W94, R126, E138, W146, R177, Q189, W198, R230, Q242, R277, and E291 each contribute to the beta-L-fucose site.

It belongs to the fungal fucose-specific lectin family. As to quaternary structure, homodimer.

Functionally, lectin that specifically binds to L-fucose and weakly reacts with mannose and N-acetyl-neuraminic acid. Has strongest preference for the alpha-1,6-fucosylated chain (core fucose) on glycoproteins among alpha-1,2-, alpha-1,3-, alpha-1,4-, and alpha-1,6-fucosylated chains. Binds to fucose residues of IgE in mice and human, causing antigen-independent IgE-mediated mast cell activation and anaphylactoid reactions in mice and is possibly implicated in allergic response to Aspergillus oryzae in humans. Induces secretion of pro-inflammatory cytokines IL6 and IL8 implicated in ocular diseases such as mycotic keratitis, probably through its interaction with host toll-like receptors TLR2 and TLR4, followed by up-regulation of pro-inflammatory cytokines. The polypeptide is Fucose-specific lectin (Aspergillus oryzae (strain ATCC 42149 / RIB 40) (Yellow koji mold)).